Consider the following 338-residue polypeptide: Activator of 90 kDa heat shock protein ATPase homolog 1 (338 aa).

An N6-acetyllysine modification is found at K3. K182 is covalently cross-linked (Glycyl lysine isopeptide (Lys-Gly) (interchain with G-Cter in SUMO1)). Phosphoserine is present on S193. A Glycyl lysine isopeptide (Lys-Gly) (interchain with G-Cter in SUMO2) cross-link involves residue K203. K212 is modified (N6-acetyllysine). Y223 carries the phosphotyrosine; by ABL modification. At S258 the chain carries Phosphoserine.

Belongs to the AHA1 family. In terms of assembly, interacts with HSPCA/HSP90. Interacts (phosphorylated on Tyr-223) with HSP90AA1; the interaction activates HSP90AA1 ATPase activity. Interacts with HSP90AB1. Interacts with GCH1. Interacts with SRPK1. Interacts with FLCN. (Microbial infection) Interacts with vesicular stomatitis virus glycoprotein (VSV G) (via cytoplasmic tail). Post-translationally, phosphorylation at Tyr-223 enhances binding to chaperone HSP90AA1. Expressed in numerous tissues, including brain, heart, skeletal muscle and kidney and, at lower levels, liver and placenta.

The protein localises to the cytoplasm. The protein resides in the cytosol. It is found in the endoplasmic reticulum. In terms of biological role, acts as a co-chaperone of HSP90AA1. Activates the ATPase activity of HSP90AA1 leading to increase in its chaperone activity. Competes with the inhibitory co-chaperone FNIP1 for binding to HSP90AA1, thereby providing a reciprocal regulatory mechanism for chaperoning of client proteins. Competes with the inhibitory co-chaperone TSC1 for binding to HSP90AA1, thereby providing a reciprocal regulatory mechanism for chaperoning of client proteins. The chain is Activator of 90 kDa heat shock protein ATPase homolog 1 (AHSA1) from Homo sapiens (Human).